The primary structure comprises 275 residues: Galaxin-2 (275 aa).

A signal peptide spans 1–20 (MTRFTSIGLCAVLLFNVCSC).

As to expression, component of the acid-insoluble and acid-soluble organic matrix of the aragonitic skeleton (at protein level).

Its subcellular location is the secreted. The polypeptide is Galaxin-2 (Acropora millepora (Staghorn coral)).